The chain runs to 440 residues: Probable carboxypeptidase AFUB_072730 (440 aa).

An N-terminal signal peptide occupies residues 1 to 16 (MKPLTSLLLSAALSAA). N-linked (GlcNAc...) asparagine glycosylation is found at Asn-87 and Asn-149. Residue Asp-165 coordinates Zn(2+). Glu-197 serves as the catalytic Proton acceptor. Glu-198 lines the Zn(2+) pocket. Asn-353 and Asn-372 each carry an N-linked (GlcNAc...) asparagine glycan.

It belongs to the peptidase M20A family. Zn(2+) serves as cofactor.

The protein localises to the secreted. This is Probable carboxypeptidase AFUB_072730 from Aspergillus fumigatus (strain CBS 144.89 / FGSC A1163 / CEA10) (Neosartorya fumigata).